The following is a 233-amino-acid chain: Small ribosomal subunit protein uS5 (233 aa).

The segment covering 1 to 13 (MAEETQNTVATES) has biased composition (polar residues). The tract at residues 1 to 40 (MAEETQNTVATESNNEDRKGRRGQRGEGRRGERRNRREEN) is disordered. A compositionally biased stretch (basic and acidic residues) spans 15–40 (NEDRKGRRGQRGEGRRGERRNRREEN). In terms of domain architecture, S5 DRBM spans 45 to 108 (LLDRVVTINR…LDAKKHMFSV (64 aa)).

This sequence belongs to the universal ribosomal protein uS5 family. In terms of assembly, part of the 30S ribosomal subunit. Contacts proteins S4 and S8.

With S4 and S12 plays an important role in translational accuracy. Its function is as follows. Located at the back of the 30S subunit body where it stabilizes the conformation of the head with respect to the body. The polypeptide is Small ribosomal subunit protein uS5 (Bifidobacterium longum (strain NCC 2705)).